Here is a 251-residue protein sequence, read N- to C-terminus: Cholesterol 25-hydroxylase-like protein (251 aa).

The next 3 membrane-spanning stretches (helical) occupy residues phenylalanine 22–leucine 42, tryptophan 69–leucine 89, and valine 108–leucine 128. In terms of domain architecture, Fatty acid hydroxylase spans alanine 113–threonine 247. A Histidine box-1 motif is present at residues tryptophan 126–histidine 130. Residues histidine 141–histidine 145 carry the Histidine box-2 motif. Positions histidine 222–glutamine 228 match the Histidine box-3 motif.

The protein belongs to the sterol desaturase family. Requires Fe cation as cofactor.

It localises to the endoplasmic reticulum membrane. It carries out the reaction cholesterol + AH2 + O2 = 25-hydroxycholesterol + A + H2O. The catalysed reaction is cholesterol + NADPH + O2 + H(+) = 25-hydroxycholesterol + NADP(+) + H2O. Functionally, catalyzes the formation of 25-hydroxycholesterol from cholesterol, leading to repress cholesterol biosynthetic enzymes. Plays a key role in cell positioning and movement in lymphoid tissues: 25-hydroxycholesterol is an intermediate in biosynthesis of 7-alpha,25-dihydroxycholesterol (7-alpha,25-OHC), an oxysterol that acts as a ligand for the G protein-coupled receptor GPR183/EBI2, a chemotactic receptor for a number of lymphoid cells. May play an important role in regulating lipid metabolism by synthesizing a corepressor that blocks sterol regulatory element binding protein (SREBP) processing. In testis, production of 25-hydroxycholesterol by macrophages may play a role in Leydig cell differentiation. This Danio rerio (Zebrafish) protein is Cholesterol 25-hydroxylase-like protein (ch25h).